The following is a 35-amino-acid chain: Photosystem II reaction center protein T (35 aa).

A helical membrane pass occupies residues 3–23 (ALVYTFLLVSTLGIIFFAIFF).

This sequence belongs to the PsbT family. In terms of assembly, PSII is composed of 1 copy each of membrane proteins PsbA, PsbB, PsbC, PsbD, PsbE, PsbF, PsbH, PsbI, PsbJ, PsbK, PsbL, PsbM, PsbT, PsbY, PsbZ, Psb30/Ycf12, at least 3 peripheral proteins of the oxygen-evolving complex and a large number of cofactors. It forms dimeric complexes.

It localises to the plastid. It is found in the chloroplast thylakoid membrane. Functionally, found at the monomer-monomer interface of the photosystem II (PS II) dimer, plays a role in assembly and dimerization of PSII. PSII is a light-driven water plastoquinone oxidoreductase, using light energy to abstract electrons from H(2)O, generating a proton gradient subsequently used for ATP formation. The chain is Photosystem II reaction center protein T from Taxus brevifolia (Pacific yew).